A 601-amino-acid polypeptide reads, in one-letter code: Serine/threonine-protein phosphatase 2A 65 kDa regulatory subunit A beta isoform (601 aa).

Ala2 carries the N-acetylalanine modification. HEAT repeat units follow at residues 20–58, 59–96, 97–135, 136–173, 174–212, 213–251, 252–290, 291–333, 334–372, 373–411, 412–450, 451–489, 490–528, 529–567, and 568–601; these read DSLY…GVER, TRTE…GGPD, FAHC…TPVA, LEAH…ASNA, VKAE…ELDS, VKTE…SQED, LEAL…GPKI, ALSD…RETV, IMNQ…GKEN, TIEH…GIRQ, LSQS…GVEF, FDEK…GTEW, AQNT…GKEI, TTKQ…DTNA, and LQGE…LALA.

The protein belongs to the phosphatase 2A regulatory subunit A family. In terms of assembly, PP2A consists of a common heterodimeric core enzyme, composed of a 36 kDa catalytic subunit (subunit C) and a 65 kDa constant regulatory subunit (PR65 or subunit A), that associates with a variety of regulatory subunits. Proteins that associate with the core dimer include three families of regulatory subunits B (the R2/B/PR55/B55, R3/B''/PR72/PR130/PR59 and R5/B'/B56 families), the 48 kDa variable regulatory subunit, viral proteins, and cell signaling molecules. Interacts with IPO9. Interacts with SGO1. Interacts with RAF1.

The PR65 subunit of protein phosphatase 2A serves as a scaffolding molecule to coordinate the assembly of the catalytic subunit and a variable regulatory B subunit. This chain is Serine/threonine-protein phosphatase 2A 65 kDa regulatory subunit A beta isoform (Ppp2r1b), found in Mus musculus (Mouse).